The sequence spans 80 residues: Phycocyanin-645 alpha-1 chain (80 aa).

Position 16 (Arg16) interacts with (2R,3E)-phycocyanobilin. Cys18, Gln24, Tyr25, and Lys40 together coordinate mesobiliverdin. 15,16-dihydrobiliverdin is bound by residues Pro71 and Ile73.

The protein belongs to the phycoerythrin family. In terms of assembly, heterotetramer of 2 different alpha chains and 2 identical beta chains which form 2 alpha-beta heterodimers within the heterotetramer. In terms of processing, contains one phycocyanobilin chromophore, one mesobiliverdin chromophore and one 15,16-dihydrobiliverdin chromophore with binding mediated by both the alpha and beta subunits.

Its subcellular location is the plastid. The protein resides in the chloroplast thylakoid membrane. Light-harvesting photosynthetic tetrapyrrole chromophore-protein from the phycobiliprotein complex. This Chroomonas sp protein is Phycocyanin-645 alpha-1 chain.